The following is a 32-amino-acid chain: Calcitonin (32 aa).

Cys1 and Cys7 are disulfide-bonded. Pro32 is modified (proline amide).

Belongs to the calcitonin family.

Its subcellular location is the secreted. Functionally, calcitonin is a peptide hormone that causes a rapid but short-lived drop in the level of calcium and phosphate in blood by promoting the incorporation of those ions in the bones. Calcitonin function is mediated by the calcitonin receptor/CALCR and the CALCR-RAMP2 (AMYR2) receptor complex. The protein is Calcitonin (CALCA) of Sus scrofa (Pig).